A 281-amino-acid polypeptide reads, in one-letter code: ATP synthase gamma chain (281 aa).

This sequence belongs to the ATPase gamma chain family. F-type ATPases have 2 components, CF(1) - the catalytic core - and CF(0) - the membrane proton channel. CF(1) has five subunits: alpha(3), beta(3), gamma(1), delta(1), epsilon(1). CF(0) has three main subunits: a, b and c.

Its subcellular location is the cell inner membrane. Produces ATP from ADP in the presence of a proton gradient across the membrane. The gamma chain is believed to be important in regulating ATPase activity and the flow of protons through the CF(0) complex. This is ATP synthase gamma chain from Ehrlichia chaffeensis (strain ATCC CRL-10679 / Arkansas).